The chain runs to 331 residues: 3'-5' exonuclease (331 aa).

The disordered stretch occupies residues 27–92 (ERVKQTNAAK…EDGPASPEKE (66 aa)). Residues 31–43 (QTNAAKKQIATNN) are compositionally biased toward polar residues. Residues 47–67 (KNQDTPEMIKDKENAESENPP) show a composition bias toward basic and acidic residues. S80 and S88 each carry phosphoserine. One can recognise a 3'-5' exonuclease domain in the interval 118-290 (SADEVMQWVE…IGQVIYREIE (173 aa)). The Mg(2+) site is built by D140, E142, and D278.

It belongs to the WRNexo family.

The protein resides in the nucleus. Has exonuclease activity on both single-stranded and duplex templates bearing overhangs, but not blunt ended duplex DNA, and cleaves in a 3'-5' direction. Essential for the formation of DNA replication focal centers. Has an important role in maintaining genome stability. The polypeptide is 3'-5' exonuclease (Drosophila grimshawi (Hawaiian fruit fly)).